The sequence spans 59 residues: Large ribosomal subunit protein bL35 (59 aa).

2 disordered regions span residues 1 to 22 and 30 to 49; these read MKVK…IKRK and APHK…TVSA. A compositionally biased stretch (basic residues) spans 30 to 43; it reads APHKTTKQKRHLRK.

This sequence belongs to the bacterial ribosomal protein bL35 family.

The chain is Large ribosomal subunit protein bL35 (rpmI) from Mycoplasma pneumoniae (strain ATCC 29342 / M129 / Subtype 1) (Mycoplasmoides pneumoniae).